The chain runs to 181 residues: CAPA peptides (181 aa).

Residues 1-22 (MQDNRFFILMILLVFSTSLNQG) form the signal peptide. Residues 23–29 (QKLKAND) constitute a propeptide that is removed on maturation. The residue at position 41 (I41) is an Isoleucine amide. A propeptide spanning residues 44–54 (NSEISSFSRSE) is cleaved from the precursor. The residue at position 65 (I65) is an Isoleucine amide. Positions 68–181 (SDVSSFDNLN…ENERDTANFL (114 aa)) are excised as a propeptide. The segment at 159-181 (TQGQGGYTPRLGRENERDTANFL) is disordered. A compositionally biased stretch (basic and acidic residues) spans 169–181 (LGRENERDTANFL).

In terms of processing, a pyrokinin potentially constituted by residues Asn-158 to Gly-170 has so far not been detected and might be completely absent in ants. Periviscerokinin 1 and 2 are expressed in central brain, antennal lobes and gnathal, thoracic and abominal ganglia. Periviscerokinin 2 is also expressed in the retrocerebral complex (at protein level).

Its subcellular location is the secreted. Its function is as follows. Periviscerokinins mediate visceral muscle contractile activity (myotropic activity). The protein is CAPA peptides of Camponotus floridanus (Florida carpenter ant).